An 829-amino-acid chain; its full sequence is G-type lectin S-receptor-like serine/threonine-protein kinase At1g34300 (829 aa).

Residues 1–25 form the signal peptide; sequence MAVKTPFLKLLPLLLLLLHFPFSFS. Bulb-type lectin domains are found at residues 26 to 140 and 143 to 260; these read TIPL…SSFD and TDTI…PVNA. Over 26–421 the chain is Extracellular; that stretch reads TIPLGSVIYA…KGDDNNSKVH (396 aa). Residues asparagine 46, asparagine 98, asparagine 130, asparagine 151, asparagine 172, asparagine 178, asparagine 189, and asparagine 195 are each glycosylated (N-linked (GlcNAc...) asparagine). The EGF-like domain maps to 264–301; the sequence is AVDQCLVYGYCGNFGICSYNDTNPICSCPSRNFDFVDV. 5 disulfides stabilise this stretch: cysteine 268–cysteine 280, cysteine 274–cysteine 289, cysteine 317–cysteine 399, cysteine 350–cysteine 373, and cysteine 354–cysteine 360. Residues asparagine 283 and asparagine 320 are each glycosylated (N-linked (GlcNAc...) asparagine). Residues 317-399 form the Apple domain; sequence CSGNTTMLDL…VPSTSYVKVC (83 aa). Asparagine 416 carries an N-linked (GlcNAc...) asparagine glycan. A helical transmembrane segment spans residues 422 to 442; it reads LWIVAVAVIAGLLGLVAVEIG. At 443-829 the chain is on the cytoplasmic side; the sequence is LWWCCCRKNP…RISEGSMLGS (387 aa). Positions 484-759 constitute a Protein kinase domain; sequence KSFKEKLGAG…GKVVQMLEGI (276 aa). Residues 490 to 498 and lysine 512 contribute to the ATP site; that span reads LGAGGFGTV. Residue serine 532 is modified to Phosphoserine. Positions 572–589 are caM-binding; sequence DSAKFLTWEYRFNIALGT. Aspartate 608 (proton acceptor) is an active-site residue. Phosphoserine occurs at positions 625 and 799.

Belongs to the protein kinase superfamily. Ser/Thr protein kinase family.

It localises to the cell membrane. The catalysed reaction is L-seryl-[protein] + ATP = O-phospho-L-seryl-[protein] + ADP + H(+). It catalyses the reaction L-threonyl-[protein] + ATP = O-phospho-L-threonyl-[protein] + ADP + H(+). This chain is G-type lectin S-receptor-like serine/threonine-protein kinase At1g34300, found in Arabidopsis thaliana (Mouse-ear cress).